The primary structure comprises 417 residues: Serine hydroxymethyltransferase (417 aa).

Residues Leu-121 and 125-127 (GHL) contribute to the (6S)-5,6,7,8-tetrahydrofolate site. An N6-(pyridoxal phosphate)lysine modification is found at Lys-230. (6S)-5,6,7,8-tetrahydrofolate is bound at residue 355–357 (SPF).

It belongs to the SHMT family. As to quaternary structure, homodimer. The cofactor is pyridoxal 5'-phosphate.

Its subcellular location is the cytoplasm. The enzyme catalyses (6R)-5,10-methylene-5,6,7,8-tetrahydrofolate + glycine + H2O = (6S)-5,6,7,8-tetrahydrofolate + L-serine. It functions in the pathway one-carbon metabolism; tetrahydrofolate interconversion. The protein operates within amino-acid biosynthesis; glycine biosynthesis; glycine from L-serine: step 1/1. Catalyzes the reversible interconversion of serine and glycine with tetrahydrofolate (THF) serving as the one-carbon carrier. This reaction serves as the major source of one-carbon groups required for the biosynthesis of purines, thymidylate, methionine, and other important biomolecules. Also exhibits THF-independent aldolase activity toward beta-hydroxyamino acids, producing glycine and aldehydes, via a retro-aldol mechanism. In Nitrosococcus oceani (strain ATCC 19707 / BCRC 17464 / JCM 30415 / NCIMB 11848 / C-107), this protein is Serine hydroxymethyltransferase.